The primary structure comprises 411 residues: 2,3-bisphosphoglycerate-independent phosphoglycerate mutase (411 aa).

This sequence belongs to the BPG-independent phosphoglycerate mutase family. A-PGAM subfamily.

It carries out the reaction (2R)-2-phosphoglycerate = (2R)-3-phosphoglycerate. Its pathway is carbohydrate degradation; glycolysis; pyruvate from D-glyceraldehyde 3-phosphate: step 3/5. Its function is as follows. Catalyzes the interconversion of 2-phosphoglycerate and 3-phosphoglycerate. This is 2,3-bisphosphoglycerate-independent phosphoglycerate mutase from Pyrobaculum islandicum (strain DSM 4184 / JCM 9189 / GEO3).